The primary structure comprises 173 residues: Large ribosomal subunit protein bL12m (173 aa).

The transit peptide at 1–33 (MFRIASRQTRNLRALSSSKNWARSLVNTRSFRA) directs the protein to the mitochondrion.

It belongs to the bacterial ribosomal protein bL12 family. Component of the mitochondrial large ribosomal subunit (mt-LSU). Mature yeast 74S mitochondrial ribosomes consist of a small (37S) and a large (54S) subunit. The 37S small subunit contains a 15S ribosomal RNA (15S mt-rRNA) and at least 32 different proteins. The 54S large subunit contains a 21S rRNA (21S mt-rRNA) and at least 45 different proteins.

It is found in the mitochondrion. Component of the mitochondrial ribosome (mitoribosome), a dedicated translation machinery responsible for the synthesis of mitochondrial genome-encoded proteins, including at least some of the essential transmembrane subunits of the mitochondrial respiratory chain. The mitoribosomes are attached to the mitochondrial inner membrane and translation products are cotranslationally integrated into the membrane. In Schizosaccharomyces pombe (strain 972 / ATCC 24843) (Fission yeast), this protein is Large ribosomal subunit protein bL12m (mrpl12).